The following is a 290-amino-acid chain: Eukaryotic translation initiation factor 3 subunit G (290 aa).

Disordered regions lie at residues 1 to 35 (MSRL…DGTK) and 157 to 200 (ESTG…GERM). In terms of domain architecture, RRM spans 210–288 (ATLRVTNVSE…LILRVEFAKR (79 aa)).

This sequence belongs to the eIF-3 subunit G family. In terms of assembly, component of the eukaryotic translation initiation factor 3 (eIF-3) complex.

The protein localises to the cytoplasm. Its function is as follows. RNA-binding component of the eukaryotic translation initiation factor 3 (eIF-3) complex, which is involved in protein synthesis of a specialized repertoire of mRNAs and, together with other initiation factors, stimulates binding of mRNA and methionyl-tRNAi to the 40S ribosome. The eIF-3 complex specifically targets and initiates translation of a subset of mRNAs involved in cell proliferation. This subunit can bind 18S rRNA. This is Eukaryotic translation initiation factor 3 subunit G (tif35) from Aspergillus clavatus (strain ATCC 1007 / CBS 513.65 / DSM 816 / NCTC 3887 / NRRL 1 / QM 1276 / 107).